The primary structure comprises 228 residues: Cytidylate kinase (228 aa).

17-25 (GPSASGKGT) contacts ATP.

It belongs to the cytidylate kinase family. Type 1 subfamily.

The protein resides in the cytoplasm. The enzyme catalyses CMP + ATP = CDP + ADP. It carries out the reaction dCMP + ATP = dCDP + ADP. The chain is Cytidylate kinase from Paraburkholderia xenovorans (strain LB400).